The following is a 248-amino-acid chain: 14-3-3-like protein 2 (248 aa).

Belongs to the 14-3-3 family. Interacts with daf-16. Interacts with sir-2.1. Interacts with hcf-1.

The protein localises to the cytoplasm. It localises to the nucleus. In terms of biological role, required for extension of lifespan by sir-2.1. Required to modulate lifespan, in concert with hcf-1, acting redundantly with 14-3-3-like protein par-5. Promotes nuclear export of yap-1. Negatively regulates the transcriptional activity of daf-16 by sequestering it to the cytoplasm. In Caenorhabditis elegans, this protein is 14-3-3-like protein 2.